Reading from the N-terminus, the 45-residue chain is DNA-directed RNA polymerase subunit Rpo12 (45 aa).

Zn(2+)-binding residues include cysteine 8, cysteine 23, and cysteine 26.

It belongs to the archaeal Rpo12/eukaryotic RPC10 RNA polymerase subunit family. As to quaternary structure, part of the RNA polymerase complex. The cofactor is Zn(2+).

It is found in the cytoplasm. The catalysed reaction is RNA(n) + a ribonucleoside 5'-triphosphate = RNA(n+1) + diphosphate. Its function is as follows. DNA-dependent RNA polymerase (RNAP) catalyzes the transcription of DNA into RNA using the four ribonucleoside triphosphates as substrates. This is DNA-directed RNA polymerase subunit Rpo12 from Methanosarcina acetivorans (strain ATCC 35395 / DSM 2834 / JCM 12185 / C2A).